The primary structure comprises 631 residues: Probable potassium transport system protein Kup 1 (631 aa).

The next 12 helical transmembrane spans lie at 17-37, 55-75, 101-121, 140-160, 166-186, 217-237, 249-269, 277-297, 338-358, 370-390, 395-415, and 420-440; these read LALG…LYAL, LSLI…MIIF, PLFY…GMLT, LYPY…SLQA, IGYL…ILGI, FLLG…ADIG, FFIA…NLIV, PFFM…ATVA, IYVP…CLAF, IAVN…AVSI, TFNV…FLGA, and FITG…IMYS.

This sequence belongs to the HAK/KUP transporter (TC 2.A.72) family.

Its subcellular location is the cell inner membrane. It carries out the reaction K(+)(in) + H(+)(in) = K(+)(out) + H(+)(out). In terms of biological role, transport of potassium into the cell. Likely operates as a K(+):H(+) symporter. The protein is Probable potassium transport system protein Kup 1 of Legionella pneumophila (strain Corby).